A 393-amino-acid polypeptide reads, in one-letter code: 6-hydroxy-3-succinoylpyridine 3-monooxygenase HspB (393 aa).

Residues 6 to 35 (RVII…VLEA) and 277 to 287 (MRNGRVILIGD) each bind FAD.

Belongs to the PheA/TfdB FAD monooxygenase family. In terms of assembly, homodimer. The cofactor is FAD.

It catalyses the reaction 4-(6-hydroxypyridin-3-yl)-4-oxobutanoate + 2 NADH + O2 + 2 H(+) = 2,5-dihydroxypyridine + succinate semialdehyde + 2 NAD(+) + H2O. The protein operates within alkaloid degradation; nicotine degradation. Its activity is regulated as follows. Inhibited by Cu(2+) and Zn(2+). Functionally, involved in the nicotine degradation. Catalyzes the cleavage of 6-hydroxy-3-succinoylpyridine (HSP) by incorporation of oxygen at the 3-position to produce to 2,5-dihydroxypyridine (DHP) and succinic semialdehyde. In Pseudomonas putida (strain DSM 28022 / S16), this protein is 6-hydroxy-3-succinoylpyridine 3-monooxygenase HspB.